Reading from the N-terminus, the 119-residue chain is Large ribosomal subunit protein uL22 (119 aa).

Belongs to the universal ribosomal protein uL22 family. Part of the 50S ribosomal subunit.

This protein binds specifically to 23S rRNA; its binding is stimulated by other ribosomal proteins, e.g. L4, L17, and L20. It is important during the early stages of 50S assembly. It makes multiple contacts with different domains of the 23S rRNA in the assembled 50S subunit and ribosome. Functionally, the globular domain of the protein is located near the polypeptide exit tunnel on the outside of the subunit, while an extended beta-hairpin is found that lines the wall of the exit tunnel in the center of the 70S ribosome. In Bifidobacterium longum (strain DJO10A), this protein is Large ribosomal subunit protein uL22.